A 264-amino-acid polypeptide reads, in one-letter code: Leukocyte receptor cluster member 1 (264 aa).

Disordered stretches follow at residues methionine 1–arginine 37 and phenylalanine 49–valine 76. Basic and acidic residues predominate over residues arginine 12–arginine 37. Positions asparagine 16–arginine 46 form a coiled coil. Serine 59 carries the post-translational modification Phosphoserine. Low complexity predominate over residues serine 59–proline 75. Positions valine 89 to threonine 115 form a coiled coil. The tract at residues glycine 118–histidine 264 is disordered. Basic and acidic residues-rich tracts occupy residues proline 146–lysine 162 and histidine 170–alanine 214. The stretch at leucine 196–glutamine 222 forms a coiled coil. Serine 245 carries the post-translational modification Phosphoserine.

The polypeptide is Leukocyte receptor cluster member 1 (LENG1) (Homo sapiens (Human)).